A 147-amino-acid polypeptide reads, in one-letter code: Large ribosomal subunit protein uL15 (147 aa).

Positions 1 to 65 (MQLHELKPAP…PLQRRLPKRG (65 aa)) are disordered. 2 stretches are compositionally biased toward gly residues: residues 21–31 (QGIGSGLGKTA) and 42–52 (SGGGVRPGFEG).

This sequence belongs to the universal ribosomal protein uL15 family. As to quaternary structure, part of the 50S ribosomal subunit.

Its function is as follows. Binds to the 23S rRNA. This is Large ribosomal subunit protein uL15 from Heliobacterium modesticaldum (strain ATCC 51547 / Ice1).